The following is a 491-amino-acid chain: CRM-domain containing factor CFM9, mitochondrial (491 aa).

A mitochondrion-targeting transit peptide spans Met-1–Glu-25. The interval Met-1–Lys-34 is disordered. Residues Ser-22–Lys-34 show a composition bias toward basic and acidic residues. Residues Glu-90–Ile-187 form the CRM domain. Residues Pro-255–Glu-265 are compositionally biased toward basic and acidic residues. 2 disordered regions span residues Pro-255–Glu-287 and Arg-328–Asp-491. Over residues Glu-277–Glu-287 the composition is skewed to acidic residues. The segment covering Arg-345 to Asp-359 has biased composition (basic and acidic residues). Over residues Ser-360–Glu-375 the composition is skewed to acidic residues. Over residues Arg-392 to Asp-416 the composition is skewed to basic and acidic residues. A compositionally biased stretch (polar residues) spans Thr-453–Ser-478.

Highly expressed in roots and meristemic regions of young seedlings. Expressed at low levels in stems, trichomes and stigma.

It localises to the mitochondrion. Involved in the splicing of group II introns in mitochondria. Required for the splicing of mitochondrial introns found in nad1, nad2, nad4, nad5, nad7, rps3 and cox2 genes. Splicing of mitochondrial introns is crucial for mitochondrial biogenesis and function, plant growth and development, and plant response to abiotic stresses. The sequence is that of CRM-domain containing factor CFM9, mitochondrial from Arabidopsis thaliana (Mouse-ear cress).